Consider the following 551-residue polypeptide: Arginine--tRNA ligase (551 aa).

The 'HIGH' region signature appears at 123-133 (ANPTGPLTIGR).

It belongs to the class-I aminoacyl-tRNA synthetase family. As to quaternary structure, monomer.

The protein localises to the cytoplasm. The catalysed reaction is tRNA(Arg) + L-arginine + ATP = L-arginyl-tRNA(Arg) + AMP + diphosphate. This Chlorobaculum parvum (strain DSM 263 / NCIMB 8327) (Chlorobium vibrioforme subsp. thiosulfatophilum) protein is Arginine--tRNA ligase.